The chain runs to 300 residues: N-acetylmuramic acid 6-phosphate etherase 1 (300 aa).

The SIS domain occupies Ala59 to Asn222. Residue Glu87 is the Proton donor of the active site. Glu118 is an active-site residue.

Belongs to the GCKR-like family. MurNAc-6-P etherase subfamily. Homodimer.

It carries out the reaction N-acetyl-D-muramate 6-phosphate + H2O = N-acetyl-D-glucosamine 6-phosphate + (R)-lactate. It participates in amino-sugar metabolism; N-acetylmuramate degradation. In terms of biological role, specifically catalyzes the cleavage of the D-lactyl ether substituent of MurNAc 6-phosphate, producing GlcNAc 6-phosphate and D-lactate. The chain is N-acetylmuramic acid 6-phosphate etherase 1 from Enterococcus faecalis (strain ATCC 700802 / V583).